A 994-amino-acid polypeptide reads, in one-letter code: cGMP-dependent protein kinase (994 aa).

The tract at residues 1–162 (MGACISKNSS…QDDSHTEEEK (162 aa)) is disordered. Glycine 2 carries N-myristoyl glycine lipidation. Cysteine 4 carries the S-palmitoyl cysteine lipid modification. Composition is skewed to low complexity over residues 9-22 (SSAR…LSAS) and 33-46 (GAAG…GAAE). Composition is skewed to basic and acidic residues over residues 65–80 (ELER…REEP) and 133–162 (EGPK…EEEK). 4 cNMP-binding domain regions span residues 189 to 305 (VCSS…FLAS), 308 to 407 (FFEM…RVLG), 463 to 539 (GIRF…ATLG), and 561 to 660 (IFRY…NEII). The 3',5'-cyclic GMP site is built by glycine 253, glutamate 254, alanine 256, arginine 263, and serine 264. Residues arginine 616, glycine 625, glutamate 626, alanine 628, arginine 635, and threonine 636 each coordinate 3',5'-cyclic GMP. A Protein kinase domain is found at 684-941 (LQVVRVVGRG…YKDIKEHAFF (258 aa)). ATP-binding positions include 690 to 698 (VGRGTFGTV) and lysine 713. Aspartate 807 functions as the Proton acceptor in the catalytic mechanism. Residues 942 to 994 (GDFDWDKLAGRGLPPPLAPKGETYAEDTEQSSFELDEDDTIVLEDEYDWDKDF) form the AGC-kinase C-terminal domain. Residues 954–976 (LPPPLAPKGETYAEDTEQSSFEL) are disordered. Over residues 965 to 976 (YAEDTEQSSFEL) the composition is skewed to acidic residues.

It belongs to the protein kinase superfamily. AGC Ser/Thr protein kinase family. cGMP subfamily. Mg(2+) is required as a cofactor.

Its subcellular location is the cytoplasm. The protein localises to the membrane. It is found in the cell membrane. The catalysed reaction is L-seryl-[protein] + ATP = O-phospho-L-seryl-[protein] + ADP + H(+). It carries out the reaction L-threonyl-[protein] + ATP = O-phospho-L-threonyl-[protein] + ADP + H(+). Activated by cGMP. The cGMP-binding domains acts cooperatively to activate PKG. Inhibited by the antiparasitic small molecule 4-[2-(4-fluorophenyl)-5-(1-methylpiperidine-4-yl)-1Hpyrrol- 3-yl]pyridine (compound 1). Functionally, serine/threonine protein kinase which acts as a downstream effector of the second messenger cGMP. Plays an essential role in tachyzoite invasion of and egress from host cells. During invasion of host cells, regulates the apico-basal flux of F-actin probably via Ca(2+)-mediated activation of CDPK1. In tachyzoites, required for microneme secretion. Required for tachyzoite gliding motility. Plays an essential role in parasite invasion of and egress from host cells, and microneme secretion. Its function is as follows. Dispensable for parasite invasion of and egress from host cells, and microneme secretion. This is cGMP-dependent protein kinase from Toxoplasma gondii.